Consider the following 136-residue polypeptide: Small ribosomal subunit protein uS19 (136 aa).

It belongs to the universal ribosomal protein uS19 family.

Functionally, protein S19 forms a complex with S13 that binds strongly to the 16S ribosomal RNA. This chain is Small ribosomal subunit protein uS19 (rps19), found in Methanothermobacter thermautotrophicus (strain ATCC 29096 / DSM 1053 / JCM 10044 / NBRC 100330 / Delta H) (Methanobacterium thermoautotrophicum).